The sequence spans 1058 residues: Carbamoyl phosphate synthase large chain (1058 aa).

Positions 1–399 are carboxyphosphate synthetic domain; that stretch reads MPIDKDIKKV…AIQKAIRSLD (399 aa). 12 residues coordinate ATP: Arg-127, Arg-167, Gly-173, Gly-174, Glu-206, Val-208, Glu-213, Gly-239, Ile-240, His-241, Gln-282, and Glu-296. The ATP-grasp 1 domain maps to 131-325; that stretch reads GHFMDKLNEP…IAKISSKIAL (195 aa). Gln-282, Glu-296, and Asn-298 together coordinate Mg(2+). The Mn(2+) site is built by Gln-282, Glu-296, and Asn-298. Positions 400–538 are oligomerization domain; it reads MGHDGFEYVE…YSTYDSGNEL (139 aa). Residues 539–924 form a carbamoyl phosphate synthetic domain region; it reads KSSNKKKIVI…YKSQLAAGMD (386 aa). One can recognise an ATP-grasp 2 domain in the interval 663 to 856; the sequence is AKLLNKLHIH…LAKVATWIMT (194 aa). Positions 699, 738, 740, 745, 770, 771, 772, 773, 813, and 827 each coordinate ATP. Residues Gln-813, Glu-827, and Asn-829 each coordinate Mg(2+). Gln-813, Glu-827, and Asn-829 together coordinate Mn(2+). Residues 923-1058 form the MGS-like domain; that stretch reads MDLPKEGKIF…KSLNEHIDGE (136 aa). Residues 925–1058 are allosteric domain; the sequence is LPKEGKIFIS…KSLNEHIDGE (134 aa).

Belongs to the CarB family. In terms of assembly, composed of two chains; the small (or glutamine) chain promotes the hydrolysis of glutamine to ammonia, which is used by the large (or ammonia) chain to synthesize carbamoyl phosphate. Tetramer of heterodimers (alpha,beta)4. Requires Mg(2+) as cofactor. Mn(2+) is required as a cofactor.

It carries out the reaction hydrogencarbonate + L-glutamine + 2 ATP + H2O = carbamoyl phosphate + L-glutamate + 2 ADP + phosphate + 2 H(+). It catalyses the reaction hydrogencarbonate + NH4(+) + 2 ATP = carbamoyl phosphate + 2 ADP + phosphate + 2 H(+). It participates in amino-acid biosynthesis; L-arginine biosynthesis; carbamoyl phosphate from bicarbonate: step 1/1. It functions in the pathway pyrimidine metabolism; UMP biosynthesis via de novo pathway; (S)-dihydroorotate from bicarbonate: step 1/3. Large subunit of the glutamine-dependent carbamoyl phosphate synthetase (CPSase). CPSase catalyzes the formation of carbamoyl phosphate from the ammonia moiety of glutamine, carbonate, and phosphate donated by ATP, constituting the first step of 2 biosynthetic pathways, one leading to arginine and/or urea and the other to pyrimidine nucleotides. The large subunit (synthetase) binds the substrates ammonia (free or transferred from glutamine from the small subunit), hydrogencarbonate and ATP and carries out an ATP-coupled ligase reaction, activating hydrogencarbonate by forming carboxy phosphate which reacts with ammonia to form carbamoyl phosphate. The chain is Carbamoyl phosphate synthase large chain from Methanobrevibacter smithii (strain ATCC 35061 / DSM 861 / OCM 144 / PS).